Here is a 376-residue protein sequence, read N- to C-terminus: MSKRDFYEVLGVGRDASEREVKKAYKRLAMKFHPDRNPGDKEAEASFKEVKEAYEILTDSDKKAAYDQFGHAGVDPNRGGGGHGGADFGDVFGDVFGDIFGGGRRGGGQRQAARGSDLRYNLELSLEEAVKGLSKELRIPTLVACEPCDGSGAKKGSKPTTCGTCHGQGQVQMRQGFFAVQQACPTCHGRGKIIKDPCNKCHGEGRVEKSKTLSVKIPAGVDTGDRIRLSGEGEAGEFGAPPGDLYVQVSVREHAIFQRDGNNLYCEVPISFSKAALGGEIEVPTLDGKVNLKIPTETQTGRMFRMRGKGVKSVRSHAVGDLLCKVVMETPVNLNERQKELLREFEETLTGQSKKHSPKAEGFFDGVKKFFQDLNS.

One can recognise a J domain in the interval 5–70 (DFYEVLGVGR…DKKAAYDQFG (66 aa)). Residues 132–210 (GLSKELRIPT…CHGEGRVEKS (79 aa)) form a CR-type zinc finger. Zn(2+) is bound by residues C145, C148, C162, C165, C184, C187, C198, and C201. CXXCXGXG motif repeat units lie at residues 145 to 152 (CEPCDGSG), 162 to 169 (CGTCHGQG), 184 to 191 (CPTCHGRG), and 198 to 205 (CNKCHGEG).

Belongs to the DnaJ family. In terms of assembly, homodimer. Requires Zn(2+) as cofactor.

The protein resides in the cytoplasm. Its function is as follows. Participates actively in the response to hyperosmotic and heat shock by preventing the aggregation of stress-denatured proteins and by disaggregating proteins, also in an autonomous, DnaK-independent fashion. Unfolded proteins bind initially to DnaJ; upon interaction with the DnaJ-bound protein, DnaK hydrolyzes its bound ATP, resulting in the formation of a stable complex. GrpE releases ADP from DnaK; ATP binding to DnaK triggers the release of the substrate protein, thus completing the reaction cycle. Several rounds of ATP-dependent interactions between DnaJ, DnaK and GrpE are required for fully efficient folding. Also involved, together with DnaK and GrpE, in the DNA replication of plasmids through activation of initiation proteins. This chain is Chaperone protein DnaJ, found in Shewanella piezotolerans (strain WP3 / JCM 13877).